Here is a 140-residue protein sequence, read N- to C-terminus: Ribosomal RNA large subunit methyltransferase H (140 aa).

Residues leucine 58, glycine 90, and 108–113 (LSLLTF) contribute to the S-adenosyl-L-methionine site.

This sequence belongs to the RNA methyltransferase RlmH family. Homodimer.

It is found in the cytoplasm. It catalyses the reaction pseudouridine(1915) in 23S rRNA + S-adenosyl-L-methionine = N(3)-methylpseudouridine(1915) in 23S rRNA + S-adenosyl-L-homocysteine + H(+). Specifically methylates the pseudouridine at position 1915 (m3Psi1915) in 23S rRNA. This chain is Ribosomal RNA large subunit methyltransferase H, found in Protochlamydia amoebophila (strain UWE25).